The sequence spans 651 residues: Mitogen-activated protein kinase kinase kinase 2 (651 aa).

The Protein kinase domain maps to 68 to 330 (WRKGQLIGRG…ASELLKHPFV (263 aa)). ATP contacts are provided by residues 74–82 (IGRGAFGTV) and lysine 97. The stretch at 105–130 (CASKEKTQAHIQELEEEVKLLKNLSH) forms a coiled coil. Residues lysine 108 and lysine 110 each participate in a glycyl lysine isopeptide (Lys-Gly) (interchain with G-Cter in ubiquitin) cross-link. Aspartate 196 serves as the catalytic Proton acceptor. Disordered regions lie at residues 460–483 (GNGETETKVSMEVDHPSYSEDENE), 537–601 (RGFL…VALS), and 618–651 (KRREITRQAGMGSSPRDRSLSRHREKSRFASPGK). Positions 464 to 477 (TETKVSMEVDHPSY) are enriched in basic and acidic residues. Residues 570 to 599 (SPESGNSSGAPKNSNASAGAEQESNSQSVA) show a composition bias toward polar residues. Residues 605–628 (RKWKEELDQELERKRREITRQAGM) are a coiled coil.

It belongs to the protein kinase superfamily. STE Ser/Thr protein kinase family. MAP kinase kinase kinase subfamily. Expressed in roots and flowers.

It localises to the cytoplasm. Its subcellular location is the cytoskeleton. It carries out the reaction L-seryl-[protein] + ATP = O-phospho-L-seryl-[protein] + ADP + H(+). The enzyme catalyses L-threonyl-[protein] + ATP = O-phospho-L-threonyl-[protein] + ADP + H(+). Functionally, involved in cortical microtubules organization and stabilization by regulating the phosphorylation state of microtubule-associated proteins such as MAP65-1. The protein is Mitogen-activated protein kinase kinase kinase 2 (ANP2) of Arabidopsis thaliana (Mouse-ear cress).